Here is a 101-residue protein sequence, read N- to C-terminus: Small ribosomal subunit protein uS10 (101 aa).

This sequence belongs to the universal ribosomal protein uS10 family. As to quaternary structure, part of the 30S ribosomal subunit.

Functionally, involved in the binding of tRNA to the ribosomes. In Saccharopolyspora erythraea (strain ATCC 11635 / DSM 40517 / JCM 4748 / NBRC 13426 / NCIMB 8594 / NRRL 2338), this protein is Small ribosomal subunit protein uS10.